The following is a 154-amino-acid chain: RxLR effector protein PITG_12737 (154 aa).

An N-terminal signal peptide occupies residues 1–16; the sequence is MRVYFILILAVATVSG. The RxLR-dEER motif lies at 42 to 58; that stretch reads RLLRAELTTDETYPEER.

Belongs to the RxLR effector family.

The protein localises to the secreted. It localises to the host nucleus. It is found in the host cytoplasm. Effector that enhances P.infestans colonization of Nicotiana benthamiana leaves. This is RxLR effector protein PITG_12737 from Phytophthora infestans (strain T30-4) (Potato late blight agent).